A 449-amino-acid chain; its full sequence is tRNA-2-methylthio-N(6)-dimethylallyladenosine synthase (449 aa).

The 122-residue stretch at 3-124 (KMLYIKTYGC…LPTMLEKLDS (122 aa)) folds into the MTTase N-terminal domain. 6 residues coordinate [4Fe-4S] cluster: cysteine 12, cysteine 48, cysteine 87, cysteine 163, cysteine 167, and cysteine 170. The 232-residue stretch at 149-380 (KSPTVSGLVS…QAQLMLQQLE (232 aa)) folds into the Radical SAM core domain. The region spanning 383–447 (QKLIGKVVPV…ASSLFGEVCP (65 aa)) is the TRAM domain.

The protein belongs to the methylthiotransferase family. MiaB subfamily. In terms of assembly, monomer. Requires [4Fe-4S] cluster as cofactor.

The protein resides in the cytoplasm. It catalyses the reaction N(6)-dimethylallyladenosine(37) in tRNA + (sulfur carrier)-SH + AH2 + 2 S-adenosyl-L-methionine = 2-methylsulfanyl-N(6)-dimethylallyladenosine(37) in tRNA + (sulfur carrier)-H + 5'-deoxyadenosine + L-methionine + A + S-adenosyl-L-homocysteine + 2 H(+). In terms of biological role, catalyzes the methylthiolation of N6-(dimethylallyl)adenosine (i(6)A), leading to the formation of 2-methylthio-N6-(dimethylallyl)adenosine (ms(2)i(6)A) at position 37 in tRNAs that read codons beginning with uridine. The protein is tRNA-2-methylthio-N(6)-dimethylallyladenosine synthase of Orientia tsutsugamushi (strain Boryong) (Rickettsia tsutsugamushi).